The chain runs to 312 residues: Protein-glutamate methylesterase/protein-glutamine glutaminase (312 aa).

A Response regulatory domain is found at 5 to 122; the sequence is RVLSVDDSAL…REGMLAYSEM (118 aa). Residue Asp56 is modified to 4-aspartylphosphate. A CheB-type methylesterase domain is found at 152-307; the sequence is LLSSEKLIAI…QQMLAKISAG (156 aa). Residues Ser164, His190, and Asp249 contribute to the active site.

This sequence belongs to the CheB family. In terms of processing, phosphorylated by CheA. Phosphorylation of the N-terminal regulatory domain activates the methylesterase activity.

It is found in the cytoplasm. The catalysed reaction is [protein]-L-glutamate 5-O-methyl ester + H2O = L-glutamyl-[protein] + methanol + H(+). It carries out the reaction L-glutaminyl-[protein] + H2O = L-glutamyl-[protein] + NH4(+). In terms of biological role, involved in chemotaxis. Part of a chemotaxis signal transduction system that modulates chemotaxis in response to various stimuli. Catalyzes the demethylation of specific methylglutamate residues introduced into the chemoreceptors (methyl-accepting chemotaxis proteins or MCP) by CheR. Also mediates the irreversible deamidation of specific glutamine residues to glutamic acid. The protein is Protein-glutamate methylesterase/protein-glutamine glutaminase of Shigella boydii serotype 4 (strain Sb227).